The chain runs to 295 residues: Proline-rich proteoglycan 2 (295 aa).

Residues Met-1–Ala-16 form the signal peptide. The segment at Ala-16–Ala-295 is disordered. The span at Glu-26 to His-41 shows a compositional bias: low complexity. Residues Pro-48 to Pro-58 show a composition bias toward pro residues. Acidic residues predominate over residues Glu-62 to Gly-78. Pro residues-rich tracts occupy residues Pro-100–Gly-187 and Gln-194–Pro-278.

Contains glycosaminoglycans of chondroitin-sulfate and heparan types.

The protein resides in the secreted. In Rattus norvegicus (Rat), this protein is Proline-rich proteoglycan 2 (Prpg2).